We begin with the raw amino-acid sequence, 292 residues long: Cytidine deaminase (292 aa).

CMP/dCMP-type deaminase domains follow at residues 47 to 167 and 186 to 292; these read TPLK…FGPK and DHQD…YYSL. Position 88 to 90 (88 to 90) interacts with substrate; it reads NQE. Histidine 101 serves as a coordination point for Zn(2+). Residue glutamate 103 is the Proton donor of the active site. Cysteine 128 and cysteine 131 together coordinate Zn(2+).

The protein belongs to the cytidine and deoxycytidylate deaminase family. In terms of assembly, homodimer. Zn(2+) serves as cofactor.

The enzyme catalyses cytidine + H2O + H(+) = uridine + NH4(+). The catalysed reaction is 2'-deoxycytidine + H2O + H(+) = 2'-deoxyuridine + NH4(+). Functionally, this enzyme scavenges exogenous and endogenous cytidine and 2'-deoxycytidine for UMP synthesis. This chain is Cytidine deaminase, found in Haemophilus influenzae (strain PittEE).